The following is a 525-amino-acid chain: Lysine--tRNA ligase (525 aa).

Mg(2+) contacts are provided by Glu419 and Glu426.

The protein belongs to the class-II aminoacyl-tRNA synthetase family. Homodimer. Mg(2+) serves as cofactor.

It is found in the cytoplasm. The enzyme catalyses tRNA(Lys) + L-lysine + ATP = L-lysyl-tRNA(Lys) + AMP + diphosphate. In Deinococcus radiodurans (strain ATCC 13939 / DSM 20539 / JCM 16871 / CCUG 27074 / LMG 4051 / NBRC 15346 / NCIMB 9279 / VKM B-1422 / R1), this protein is Lysine--tRNA ligase (lysS).